The sequence spans 420 residues: MSNTQKQLALAKAAKKSVNTADTEEKNRALLAMADSLEAAAADILAANRQDLEAAAGNIPESMTDRLLLDGKRICAMADGIRAVAALPDPVGEILETSTLPNGLEIVKKRVAMGVIGIIYESRPNVTSDAAALALKSGSAVVLRSGKDAFQSARAIVAALKAGLAQTRIDPDALQLIEDTGREGSYEMMRAKDYLDLLIPRGGAGLIRAVVENAVVPVIETGTGIVHIYIDKDADWDKALRIVYNAKTSRPSVCNSMEVLLVHEDIAADFLPKLERLLVRDRIEAGLPPVRFRLDPQAARHIGGEAAGADDFDTEFLDYILAVKTVASVEEAVWHIETHSTHHSDGIVTENRHAADYFTTHIDSAAVYVNASTRFTDGGEFGLGCEMGISTQKLHARGPMGLKELTSYKYIVQGTGQVRE.

It belongs to the gamma-glutamyl phosphate reductase family.

The protein resides in the cytoplasm. It carries out the reaction L-glutamate 5-semialdehyde + phosphate + NADP(+) = L-glutamyl 5-phosphate + NADPH + H(+). Its pathway is amino-acid biosynthesis; L-proline biosynthesis; L-glutamate 5-semialdehyde from L-glutamate: step 2/2. Catalyzes the NADPH-dependent reduction of L-glutamate 5-phosphate into L-glutamate 5-semialdehyde and phosphate. The product spontaneously undergoes cyclization to form 1-pyrroline-5-carboxylate. This Neisseria meningitidis serogroup C (strain 053442) protein is Gamma-glutamyl phosphate reductase.